The sequence spans 138 residues: Eukaryotic translation initiation factor 1A (138 aa).

A compositionally biased stretch (basic residues) spans 1 to 15; the sequence is MPKNKGKGGKNRRRG. The disordered stretch occupies residues 1–28; sequence MPKNKGKGGKNRRRGKNENENEKRELTY. Positions 16–27 are enriched in basic and acidic residues; the sequence is KNENENEKRELT. In terms of domain architecture, S1-like spans 22–96; that stretch reads EKRELTYAEE…EKGDVILKYT (75 aa).

Belongs to the eIF-1A family.

Its function is as follows. Seems to be required for maximal rate of protein biosynthesis. Enhances ribosome dissociation into subunits and stabilizes the binding of the initiator Met-tRNA(I) to 40 S ribosomal subunits. The chain is Eukaryotic translation initiation factor 1A (tif11) from Schizosaccharomyces pombe (strain 972 / ATCC 24843) (Fission yeast).